We begin with the raw amino-acid sequence, 117 residues long: Large ribosomal subunit protein bL20 (117 aa).

Belongs to the bacterial ribosomal protein bL20 family.

Its function is as follows. Binds directly to 23S ribosomal RNA and is necessary for the in vitro assembly process of the 50S ribosomal subunit. It is not involved in the protein synthesizing functions of that subunit. In Aliivibrio fischeri (strain ATCC 700601 / ES114) (Vibrio fischeri), this protein is Large ribosomal subunit protein bL20.